The primary structure comprises 98 residues: Co-chaperonin GroES (98 aa).

Belongs to the GroES chaperonin family. As to quaternary structure, heptamer of 7 subunits arranged in a ring. Interacts with the chaperonin GroEL.

It is found in the cytoplasm. In terms of biological role, together with the chaperonin GroEL, plays an essential role in assisting protein folding. The GroEL-GroES system forms a nano-cage that allows encapsulation of the non-native substrate proteins and provides a physical environment optimized to promote and accelerate protein folding. GroES binds to the apical surface of the GroEL ring, thereby capping the opening of the GroEL channel. This is Co-chaperonin GroES from Corynebacterium diphtheriae (strain ATCC 700971 / NCTC 13129 / Biotype gravis).